The primary structure comprises 419 residues: Tol-Pal system protein TolB (419 aa).

The first 17 residues, methionine 1–glycine 17, serve as a signal peptide directing secretion.

Belongs to the TolB family. In terms of assembly, the Tol-Pal system is composed of five core proteins: the inner membrane proteins TolA, TolQ and TolR, the periplasmic protein TolB and the outer membrane protein Pal. They form a network linking the inner and outer membranes and the peptidoglycan layer.

The protein localises to the periplasm. In terms of biological role, part of the Tol-Pal system, which plays a role in outer membrane invagination during cell division and is important for maintaining outer membrane integrity. In Helicobacter hepaticus (strain ATCC 51449 / 3B1), this protein is Tol-Pal system protein TolB.